We begin with the raw amino-acid sequence, 191 residues long: dTTP/UTP pyrophosphatase (191 aa).

Residue aspartate 68 is the Proton acceptor of the active site.

Belongs to the Maf family. YhdE subfamily. The cofactor is a divalent metal cation.

The protein resides in the cytoplasm. The catalysed reaction is dTTP + H2O = dTMP + diphosphate + H(+). The enzyme catalyses UTP + H2O = UMP + diphosphate + H(+). Its function is as follows. Nucleoside triphosphate pyrophosphatase that hydrolyzes dTTP and UTP. May have a dual role in cell division arrest and in preventing the incorporation of modified nucleotides into cellular nucleic acids. The polypeptide is dTTP/UTP pyrophosphatase (Thermoanaerobacter pseudethanolicus (strain ATCC 33223 / 39E) (Clostridium thermohydrosulfuricum)).